The chain runs to 472 residues: Glutamine synthetase (472 aa).

In terms of domain architecture, GS beta-grasp spans 17–101 (YDIKFVLLRF…LRCSIYEPST (85 aa)). A GS catalytic domain is found at 109-472 (PRSIAIRAEN…HPVEFEMYYA (364 aa)). Residues Glu-134 and Glu-136 each coordinate Mg(2+). Glu-212 provides a ligand contact to ATP. The Mg(2+) site is built by Glu-217 and Glu-225. L-glutamate-binding positions include 269–270 (NG) and Gly-270. His-274 contributes to the Mg(2+) binding site. ATP is bound by residues 276 to 278 (NMS) and Ser-278. Positions 326, 332, and 344 each coordinate L-glutamate. Arg-344, Arg-349, and Lys-357 together coordinate ATP. A Mg(2+)-binding site is contributed by Glu-362. L-glutamate is bound at residue Arg-364. Tyr-402 carries the O-AMP-tyrosine modification.

Belongs to the glutamine synthetase family. As to quaternary structure, oligomer of 12 subunits arranged in the form of two hexameric ring. Mg(2+) is required as a cofactor.

It localises to the cytoplasm. It catalyses the reaction L-glutamate + NH4(+) + ATP = L-glutamine + ADP + phosphate + H(+). With respect to regulation, the activity of this enzyme could be controlled by adenylation under conditions of abundant glutamine. Functionally, catalyzes the ATP-dependent biosynthesis of glutamine from glutamate and ammonia. The protein is Glutamine synthetase of Pasteurella multocida (strain Pm70).